Consider the following 142-residue polypeptide: Protein archease (142 aa).

Ca(2+) contacts are provided by aspartate 12, aspartate 141, and isoleucine 142.

Belongs to the archease family. In solution, exists as a monomer, trimer and hexamer. Oligomeric states form a tripartite complex with tRNA and PAB1947 methyltransferase.

In terms of biological role, activates the tRNA-splicing ligase complex by facilitating the enzymatic turnover of catalytic subunit RtcB. Acts by promoting the guanylylation of RtcB, a key intermediate step in tRNA ligation. Can also alter the NTP specificity of RtcB such that ATP, dGTP or ITP is used efficiently. Chaperone or modulator of proteins involved in DNA or RNA processing. Protects the tRNA (cytosine-5-)-methyltransferase PAB1947 against aggregation and increases its specificity. This Pyrococcus abyssi (strain GE5 / Orsay) protein is Protein archease.